A 178-amino-acid polypeptide reads, in one-letter code: ATP synthase subunit delta (178 aa).

This sequence belongs to the ATPase delta chain family. F-type ATPases have 2 components, F(1) - the catalytic core - and F(0) - the membrane proton channel. F(1) has five subunits: alpha(3), beta(3), gamma(1), delta(1), epsilon(1). F(0) has three main subunits: a(1), b(2) and c(10-14). The alpha and beta chains form an alternating ring which encloses part of the gamma chain. F(1) is attached to F(0) by a central stalk formed by the gamma and epsilon chains, while a peripheral stalk is formed by the delta and b chains.

It localises to the cell membrane. In terms of biological role, f(1)F(0) ATP synthase produces ATP from ADP in the presence of a proton or sodium gradient. F-type ATPases consist of two structural domains, F(1) containing the extramembraneous catalytic core and F(0) containing the membrane proton channel, linked together by a central stalk and a peripheral stalk. During catalysis, ATP synthesis in the catalytic domain of F(1) is coupled via a rotary mechanism of the central stalk subunits to proton translocation. Its function is as follows. This protein is part of the stalk that links CF(0) to CF(1). It either transmits conformational changes from CF(0) to CF(1) or is implicated in proton conduction. The polypeptide is ATP synthase subunit delta (Streptococcus equi subsp. zooepidemicus (strain MGCS10565)).